Reading from the N-terminus, the 76-residue chain is Omega-scoloptoxin(13)-Ssm2b (76 aa).

An N-terminal signal peptide occupies residues 1–22 (MAYIYALIFAIVVCMNTDVIQA).

The protein belongs to the scoloptoxin-13 family. In terms of processing, contains 3 disulfide bonds. Expressed by the venom gland.

The protein resides in the secreted. Functionally, inhibits voltage-gated calcium channel (Cav) currents. The sequence is that of Omega-scoloptoxin(13)-Ssm2b from Scolopendra mutilans (Chinese red-headed centipede).